We begin with the raw amino-acid sequence, 397 residues long: Argininosuccinate synthase (397 aa).

9–17 (AYSGGLDTS) is an ATP binding site. Residue Tyr87 coordinates L-citrulline. Gly117 is an ATP binding site. 3 residues coordinate L-aspartate: Thr119, Asn123, and Asp124. Asn123 provides a ligand contact to L-citrulline. Residues Arg127, Ser175, Ser184, Glu260, and Tyr272 each contribute to the L-citrulline site.

It belongs to the argininosuccinate synthase family. Type 1 subfamily. Homotetramer.

The protein localises to the cytoplasm. The enzyme catalyses L-citrulline + L-aspartate + ATP = 2-(N(omega)-L-arginino)succinate + AMP + diphosphate + H(+). The protein operates within amino-acid biosynthesis; L-arginine biosynthesis; L-arginine from L-ornithine and carbamoyl phosphate: step 2/3. This is Argininosuccinate synthase from Methanococcus maripaludis (strain DSM 14266 / JCM 13030 / NBRC 101832 / S2 / LL).